Reading from the N-terminus, the 307-residue chain is Ribonuclease Z (307 aa).

Residues His63, His65, Asp67, His68, His140, Asp211, and His269 each coordinate Zn(2+). Residue Asp67 is the Proton acceptor of the active site.

Belongs to the RNase Z family. As to quaternary structure, homodimer. It depends on Zn(2+) as a cofactor.

It catalyses the reaction Endonucleolytic cleavage of RNA, removing extra 3' nucleotides from tRNA precursor, generating 3' termini of tRNAs. A 3'-hydroxy group is left at the tRNA terminus and a 5'-phosphoryl group is left at the trailer molecule.. Functionally, zinc phosphodiesterase, which displays some tRNA 3'-processing endonuclease activity. Probably involved in tRNA maturation, by removing a 3'-trailer from precursor tRNA. The polypeptide is Ribonuclease Z (Geobacillus kaustophilus (strain HTA426)).